A 177-amino-acid chain; its full sequence is Large ribosomal subunit protein uL6 (177 aa).

Belongs to the universal ribosomal protein uL6 family. As to quaternary structure, part of the 50S ribosomal subunit.

In terms of biological role, this protein binds to the 23S rRNA, and is important in its secondary structure. It is located near the subunit interface in the base of the L7/L12 stalk, and near the tRNA binding site of the peptidyltransferase center. The chain is Large ribosomal subunit protein uL6 from Aeromonas salmonicida (strain A449).